The following is a 234-amino-acid chain: 2-C-methyl-D-erythritol 4-phosphate cytidylyltransferase (234 aa).

The protein belongs to the IspD/TarI cytidylyltransferase family. IspD subfamily.

The enzyme catalyses 2-C-methyl-D-erythritol 4-phosphate + CTP + H(+) = 4-CDP-2-C-methyl-D-erythritol + diphosphate. It functions in the pathway isoprenoid biosynthesis; isopentenyl diphosphate biosynthesis via DXP pathway; isopentenyl diphosphate from 1-deoxy-D-xylulose 5-phosphate: step 2/6. In terms of biological role, catalyzes the formation of 4-diphosphocytidyl-2-C-methyl-D-erythritol from CTP and 2-C-methyl-D-erythritol 4-phosphate (MEP). The protein is 2-C-methyl-D-erythritol 4-phosphate cytidylyltransferase of Shewanella sediminis (strain HAW-EB3).